The sequence spans 303 residues: Bidirectional sugar transporter SWEET14 (303 aa).

Residues 1-9 lie on the Extracellular side of the membrane; that stretch reads MAGMSLQHP. Residues 10-30 form a helical membrane-spanning segment; the sequence is WAFAFGLLGNIISFMTYLAPL. The 86-residue stretch at 13 to 98 folds into the MtN3/slv 1 domain; sequence AFGLLGNIIS…AVYLVYAPKK (86 aa). Over 31–44 the chain is Cytoplasmic; sequence PTFYRIYKSKSTQG. A helical membrane pass occupies residues 45–65; sequence FQSVPYVVALFSAMLWIYYAL. At 66 to 72 the chain is on the extracellular side; the sequence is LKSDECL. The helical transmembrane segment at 73-93 threads the bilayer; sequence LITINSAGCVIETIYIAVYLV. The Cytoplasmic portion of the chain corresponds to 94-105; that stretch reads YAPKKAKMFTAK. Residues 106–126 form a helical membrane-spanning segment; the sequence is LLLLVNVGVFGLILLLTLLLS. The Extracellular portion of the chain corresponds to 127–133; that stretch reads AGDRRIV. The chain crosses the membrane as a helical span at residues 134-154; that stretch reads VLGWVCVGFSVSVFVAPLSII. The MtN3/slv 2 domain maps to 134 to 217; the sequence is VLGWVCVGFS…MGLYAMYRNS (84 aa). The Cytoplasmic portion of the chain corresponds to 155-167; that stretch reads RLVVRTKSVEFMP. The chain crosses the membrane as a helical span at residues 168–188; sequence FSLSFSLTISAVVWFLYGLLI. Residues 189–192 are Extracellular-facing; it reads KDKY. The chain crosses the membrane as a helical span at residues 193 to 213; it reads VALPNVLGFSFGVIQMGLYAM. The Cytoplasmic portion of the chain corresponds to 214–303; sequence YRNSTPKAVL…AGAGEKKVAA (90 aa). The segment at 266–290 is disordered; sequence HPVDVESPPAEAPPEEDDKAAAATA.

Belongs to the SWEET sugar transporter family. Forms homooligomers and/or heterooligomers.

Its subcellular location is the cell membrane. Functionally, mediates both low-affinity uptake and efflux of sugar across the plasma membrane. Confers blight susceptibility. Confers TAL effector-mediated susceptibility to Xanthomonas oryzae pv. oryzae. In Oryza sativa subsp. japonica (Rice), this protein is Bidirectional sugar transporter SWEET14 (SWEET14).